The sequence spans 163 residues: MTIVSQVILKADDELRYPSGGELKNITDFFKTGEQRLRIAQVLSDSEKKIVDQASRKLWQRRPDFIAPGGNAYGQRQRAQCLRDYGWYLRLITYGVLAGDKEPIESIGLLGAREMYNSLGVPLPGMAEAIRTLKEASLALLSSADATVAAPYFDFLIQGMETI.

Residue Asn-71 is modified to N4-methylasparagine. Cys-81 is a (2R,3E)-phycocyanobilin binding site.

Belongs to the phycobiliprotein family. Heterodimer of an alpha and a beta chain. Post-translationally, contains one covalently linked bilin chromophore.

It localises to the cellular thylakoid membrane. Light-harvesting photosynthetic bile pigment-protein from the phycobiliprotein complex. Allophycocyanin has a maximum absorption at approximately 650 nanometers. In Synechococcus sp. (strain ATCC 27144 / PCC 6301 / SAUG 1402/1) (Anacystis nidulans), this protein is Allophycocyanin alpha-B chain.